Consider the following 342-residue polypeptide: 4-hydroxy-2-oxovalerate aldolase (342 aa).

Residues 8–260 form the Pyruvate carboxyltransferase domain; sequence ITVHDMTLRD…ATGVDLFKMQ (253 aa). 16 to 17 is a binding site for substrate; the sequence is RD. Asp17 provides a ligand contact to Mn(2+). His20 (proton acceptor) is an active-site residue. Substrate is bound by residues Ser170 and His199. The Mn(2+) site is built by His199 and His201. Substrate is bound at residue Tyr290.

It belongs to the 4-hydroxy-2-oxovalerate aldolase family.

It carries out the reaction (S)-4-hydroxy-2-oxopentanoate = acetaldehyde + pyruvate. In Albidiferax ferrireducens (strain ATCC BAA-621 / DSM 15236 / T118) (Rhodoferax ferrireducens), this protein is 4-hydroxy-2-oxovalerate aldolase.